We begin with the raw amino-acid sequence, 203 residues long: Orotate phosphoribosyltransferase (203 aa).

Residues R94, K95, K98, H100, and 119–127 each bind 5-phospho-alpha-D-ribose 1-diphosphate; that span reads DDVATTGGS. T123 and R151 together coordinate orotate.

It belongs to the purine/pyrimidine phosphoribosyltransferase family. PyrE subfamily. Homodimer. The cofactor is Mg(2+).

The catalysed reaction is orotidine 5'-phosphate + diphosphate = orotate + 5-phospho-alpha-D-ribose 1-diphosphate. It participates in pyrimidine metabolism; UMP biosynthesis via de novo pathway; UMP from orotate: step 1/2. In terms of biological role, catalyzes the transfer of a ribosyl phosphate group from 5-phosphoribose 1-diphosphate to orotate, leading to the formation of orotidine monophosphate (OMP). The chain is Orotate phosphoribosyltransferase from Staphylothermus marinus (strain ATCC 43588 / DSM 3639 / JCM 9404 / F1).